The primary structure comprises 527 residues: Glucose-6-phosphate isomerase (527 aa).

The active-site Proton donor is glutamate 323. Catalysis depends on residues histidine 352 and lysine 454.

The protein belongs to the GPI family.

Its subcellular location is the cytoplasm. The catalysed reaction is alpha-D-glucose 6-phosphate = beta-D-fructose 6-phosphate. It participates in carbohydrate biosynthesis; gluconeogenesis. It functions in the pathway carbohydrate degradation; glycolysis; D-glyceraldehyde 3-phosphate and glycerone phosphate from D-glucose: step 2/4. In terms of biological role, catalyzes the reversible isomerization of glucose-6-phosphate to fructose-6-phosphate. In Prochlorococcus marinus (strain MIT 9215), this protein is Glucose-6-phosphate isomerase.